We begin with the raw amino-acid sequence, 283 residues long: GTPase Era (283 aa).

In terms of domain architecture, Era-type G spans 7-175 (YCGHVIIVGK…KNIIKSYLPE (169 aa)). Residues 15 to 22 (GKANVGKS) form a G1 region. A GTP-binding site is contributed by 15-22 (GKANVGKS). A G2 region spans residues 41–45 (NTTQS). The segment at 62-65 (DTPG) is G3. GTP contacts are provided by residues 62-66 (DTPGV) and 124-127 (NKID). A G4 region spans residues 124 to 127 (NKID). Residues 154–156 (ISA) form a G5 region. A KH type-2 domain is found at 198–283 (IREQLILFLG…HLVLWVKDKN (86 aa)).

Belongs to the TRAFAC class TrmE-Era-EngA-EngB-Septin-like GTPase superfamily. Era GTPase family. Monomer.

The protein localises to the cytoplasm. It is found in the cell membrane. Its function is as follows. An essential GTPase that binds both GDP and GTP, with rapid nucleotide exchange. Plays a role in 16S rRNA processing and 30S ribosomal subunit biogenesis and possibly also in cell cycle regulation and energy metabolism. This Buchnera aphidicola subsp. Acyrthosiphon pisum (strain Tuc7) protein is GTPase Era.